Reading from the N-terminus, the 100-residue chain is Secreted protein of Ly-6 domain 1 (100 aa).

Residues M1 to A22 form the signal peptide. The UPAR/Ly6 domain occupies L23–F100. 5 disulfides stabilise this stretch: C25–C52, C28–C37, C44–C70, C74–C90, and C91–C97. N60 carries an N-linked (GlcNAc...) asparagine glycan.

Post-translationally, glycosylated. In terms of tissue distribution, expressed in placenta, where it is detected in both fetal tissues (cotyledon and intercotyledon) and maternal tissues (caruncle and intercaruncular endometrium) (at protein level). Expressed in the mesenchyme area of villi in the cotyledon (at protein level). In endometrium, expressed in the luminal epithelium and weakly in the subluminal stroma (at protein level). Detected in trophoblast mononucleate cells (TMCs) (at protein level). Also detected in trophoblast binucleate cells (BNCs). Overall, expression is strongest in fetal tissue and lower in maternal tissue. Not detected in other tissues tested.

It is found in the secreted. Binds specifically to type I collagen. This chain is Secreted protein of Ly-6 domain 1, found in Bos taurus (Bovine).